A 150-amino-acid polypeptide reads, in one-letter code: Transmembrane protein 35B (150 aa).

A signal peptide spans 1-21; it reads MSFRVGVLRVLLGVFFALTGA. Helical transmembrane passes span 62 to 82, 84 to 104, and 111 to 131; these read TAVG…PPVL, EISN…LVVL, and YVPA…HFLA.

The protein belongs to the DoxX family.

Its subcellular location is the membrane. The chain is Transmembrane protein 35B from Mus musculus (Mouse).